We begin with the raw amino-acid sequence, 243 residues long: Zinc import ATP-binding protein ZnuC (243 aa).

The region spanning 25–242 is the ABC transporter domain; it reads LVVDSITLFY…AKFMSVFPEN (218 aa). 57–64 is an ATP binding site; the sequence is GPNGGGKT.

Belongs to the ABC transporter superfamily. Zinc importer (TC 3.A.1.15.5) family. In terms of assembly, the complex is composed of two ATP-binding proteins (ZnuC), two transmembrane proteins (ZnuB) and a solute-binding protein (ZnuA).

It localises to the cell inner membrane. It catalyses the reaction Zn(2+)(out) + ATP(in) + H2O(in) = Zn(2+)(in) + ADP(in) + phosphate(in) + H(+)(in). Functionally, part of the ABC transporter complex ZnuABC involved in zinc import. Responsible for energy coupling to the transport system. This chain is Zinc import ATP-binding protein ZnuC, found in Anaplasma phagocytophilum (strain HZ).